The primary structure comprises 116 residues: G antigen 2A (116 aa).

Positions 1-116 (MSWRGRSTYR…PEEGEKQSQC (116 aa)) are disordered. 2 stretches are compositionally biased toward acidic residues: residues 31 to 44 (FSDE…EEGE) and 86 to 95 (ECEDGPDGQE). Basic and acidic residues predominate over residues 102-116 (EEVKTPEEGEKQSQC).

This sequence belongs to the GAGE family.

In Homo sapiens (Human), this protein is G antigen 2A (GAGE2A).